The chain runs to 312 residues: MALYAVDKPLHLTSHDVVEEARRRLSTRRVGHTGTLDPLATGLLLLVTNESTKLVPFLSGEDKEYIAWVSFGATTPTLDAEGPISEEAPARFDRKDLEAALPRFLEVREQVPPLYSAIKVGGKRAYEAAREGKPLALGPRPVRYLEVELLAFDPEPIPHPIAPSARGWRLAERRGRPVRLPRPLGAYPTAVVRLVVGPGTYVRAFARDLGEMLGTKAFLSGLVRTRVGRVGLERAVALSDLSPEKAIPELDVLPFPVVELSHTEARRVLEGMPLPIPAMGYVTLVDSKRRLLAIAEGDGFKLKIRRVFAKEA.

Asp-37 acts as the Nucleophile in catalysis.

Belongs to the pseudouridine synthase TruB family. Type 1 subfamily.

The enzyme catalyses uridine(55) in tRNA = pseudouridine(55) in tRNA. In terms of biological role, responsible for synthesis of pseudouridine from uracil-55 in the psi GC loop of transfer RNAs. The polypeptide is tRNA pseudouridine synthase B (Thermus thermophilus (strain ATCC BAA-163 / DSM 7039 / HB27)).